The following is a 146-amino-acid chain: Putative pre-16S rRNA nuclease (146 aa).

Belongs to the YqgF nuclease family.

The protein localises to the cytoplasm. Could be a nuclease involved in processing of the 5'-end of pre-16S rRNA. This is Putative pre-16S rRNA nuclease from Burkholderia pseudomallei (strain 668).